The primary structure comprises 169 residues: Ribosome maturation factor RimM (169 aa).

One can recognise a PRC barrel domain in the interval 94-168; the sequence is DDEFYHADLI…RIVADPPEGL (75 aa).

This sequence belongs to the RimM family. In terms of assembly, binds ribosomal protein uS19.

The protein resides in the cytoplasm. In terms of biological role, an accessory protein needed during the final step in the assembly of 30S ribosomal subunit, possibly for assembly of the head region. Essential for efficient processing of 16S rRNA. May be needed both before and after RbfA during the maturation of 16S rRNA. It has affinity for free ribosomal 30S subunits but not for 70S ribosomes. In Cereibacter sphaeroides (strain ATCC 17023 / DSM 158 / JCM 6121 / CCUG 31486 / LMG 2827 / NBRC 12203 / NCIMB 8253 / ATH 2.4.1.) (Rhodobacter sphaeroides), this protein is Ribosome maturation factor RimM.